A 108-amino-acid polypeptide reads, in one-letter code: uncharacterized protein (108 aa).

The segment at 56-108 is disordered; the sequence is ELPSRGCLPAPRPESGQGRLSTGISQNGGRSSAQPCPRCIAGESGHFSHTKNH. The span at 73–89 shows a compositional bias: polar residues; it reads GRLSTGISQNGGRSSAQ.

This is an uncharacterized protein from Homo sapiens (Human).